Reading from the N-terminus, the 644-residue chain is Exoribonuclease 2 (644 aa).

An RNB domain is found at 189–516 (RKDLTALDFV…NHRLLKAVIK (328 aa)). The S1 motif domain occupies 561-643 (DTRFAAEIVD…ETRSIIARPV (83 aa)).

It belongs to the RNR ribonuclease family. RNase II subfamily.

It is found in the cytoplasm. It carries out the reaction Exonucleolytic cleavage in the 3'- to 5'-direction to yield nucleoside 5'-phosphates.. Involved in mRNA degradation. Hydrolyzes single-stranded polyribonucleotides processively in the 3' to 5' direction. This chain is Exoribonuclease 2, found in Escherichia coli O157:H7.